Consider the following 315-residue polypeptide: tRNA pseudouridine synthase B (315 aa).

H42 contacts substrate. Catalysis depends on D47, which acts as the Nucleophile. The substrate site is built by Y75, Y178, and L199.

The protein belongs to the pseudouridine synthase TruB family. Type 1 subfamily.

It catalyses the reaction uridine(55) in tRNA = pseudouridine(55) in tRNA. Its function is as follows. Responsible for synthesis of pseudouridine from uracil-55 in the psi GC loop of transfer RNAs. The protein is tRNA pseudouridine synthase B of Photorhabdus laumondii subsp. laumondii (strain DSM 15139 / CIP 105565 / TT01) (Photorhabdus luminescens subsp. laumondii).